A 284-amino-acid chain; its full sequence is Release factor glutamine methyltransferase (284 aa).

Residues 125–129, E148, and N190 contribute to the S-adenosyl-L-methionine site; that span reads GVGSG. 190-193 lines the substrate pocket; the sequence is NPPY.

This sequence belongs to the protein N5-glutamine methyltransferase family. PrmC subfamily.

The enzyme catalyses L-glutaminyl-[peptide chain release factor] + S-adenosyl-L-methionine = N(5)-methyl-L-glutaminyl-[peptide chain release factor] + S-adenosyl-L-homocysteine + H(+). In terms of biological role, methylates the class 1 translation termination release factors RF1/PrfA and RF2/PrfB on the glutamine residue of the universally conserved GGQ motif. This chain is Release factor glutamine methyltransferase, found in Geobacter sulfurreducens (strain ATCC 51573 / DSM 12127 / PCA).